Here is a 439-residue protein sequence, read N- to C-terminus: Histidine--tRNA ligase (439 aa).

It belongs to the class-II aminoacyl-tRNA synthetase family. As to quaternary structure, homodimer.

Its subcellular location is the cytoplasm. The catalysed reaction is tRNA(His) + L-histidine + ATP = L-histidyl-tRNA(His) + AMP + diphosphate + H(+). In Leptospira interrogans serogroup Icterohaemorrhagiae serovar Lai (strain 56601), this protein is Histidine--tRNA ligase (hisS).